The chain runs to 298 residues: GTP cyclohydrolase FolE2 (298 aa).

The protein belongs to the GTP cyclohydrolase IV family.

It carries out the reaction GTP + H2O = 7,8-dihydroneopterin 3'-triphosphate + formate + H(+). It functions in the pathway cofactor biosynthesis; 7,8-dihydroneopterin triphosphate biosynthesis; 7,8-dihydroneopterin triphosphate from GTP: step 1/1. In terms of biological role, converts GTP to 7,8-dihydroneopterin triphosphate. In Xylella fastidiosa (strain M12), this protein is GTP cyclohydrolase FolE2.